The primary structure comprises 468 residues: Chromosomal replication initiator protein DnaA (468 aa).

Residues 1-84 (MSSSLWLQCL…RFEVGSKPIS (84 aa)) are domain I, interacts with DnaA modulators. The interval 84-131 (SAPPRPQRTAADVAAATSAPAQMQARQSLHKPWESRGPEPVDDLNHRS) is domain II. The disordered stretch occupies residues 112–132 (LHKPWESRGPEPVDDLNHRSN). Residues 114 to 129 (KPWESRGPEPVDDLNH) show a composition bias toward basic and acidic residues. The interval 132–348 (NVNPKHKFTN…GALNRVVANA (217 aa)) is domain III, AAA+ region. The ATP site is built by Gly-176, Gly-178, Lys-179, and Thr-180. Residues 349–468 (NFTGRAITID…YSNLIRTLSS (120 aa)) form a domain IV, binds dsDNA region.

It belongs to the DnaA family. Oligomerizes as a right-handed, spiral filament on DNA at oriC.

Its subcellular location is the cytoplasm. Functionally, plays an essential role in the initiation and regulation of chromosomal replication. ATP-DnaA binds to the origin of replication (oriC) to initiate formation of the DNA replication initiation complex once per cell cycle. Binds the DnaA box (a 9 base pair repeat at the origin) and separates the double-stranded (ds)DNA. Forms a right-handed helical filament on oriC DNA; dsDNA binds to the exterior of the filament while single-stranded (ss)DNA is stabiized in the filament's interior. The ATP-DnaA-oriC complex binds and stabilizes one strand of the AT-rich DNA unwinding element (DUE), permitting loading of DNA polymerase. After initiation quickly degrades to an ADP-DnaA complex that is not apt for DNA replication. Binds acidic phospholipids. This Aliivibrio salmonicida (strain LFI1238) (Vibrio salmonicida (strain LFI1238)) protein is Chromosomal replication initiator protein DnaA.